The sequence spans 331 residues: Ketol-acid reductoisomerase (NADP(+)) (331 aa).

Residues 2-181 (TKVYYEDAVK…GATRAGVIET (180 aa)) enclose the KARI N-terminal Rossmann domain. Residues 25 to 28 (YGSQ), Arg48, Ser52, and 82 to 85 (DETQ) contribute to the NADP(+) site. Residue His107 is part of the active site. An NADP(+)-binding site is contributed by Gly133. One can recognise a KARI C-terminal knotted domain in the interval 182-327 (TFKEETETDL…AELREMMPFV (146 aa)). Positions 190, 194, 226, and 230 each coordinate Mg(2+). Substrate is bound at residue Ser251.

The protein belongs to the ketol-acid reductoisomerase family. The cofactor is Mg(2+).

The enzyme catalyses (2R)-2,3-dihydroxy-3-methylbutanoate + NADP(+) = (2S)-2-acetolactate + NADPH + H(+). The catalysed reaction is (2R,3R)-2,3-dihydroxy-3-methylpentanoate + NADP(+) = (S)-2-ethyl-2-hydroxy-3-oxobutanoate + NADPH + H(+). It participates in amino-acid biosynthesis; L-isoleucine biosynthesis; L-isoleucine from 2-oxobutanoate: step 2/4. Its pathway is amino-acid biosynthesis; L-valine biosynthesis; L-valine from pyruvate: step 2/4. Its function is as follows. Involved in the biosynthesis of branched-chain amino acids (BCAA). Catalyzes an alkyl-migration followed by a ketol-acid reduction of (S)-2-acetolactate (S2AL) to yield (R)-2,3-dihydroxy-isovalerate. In the isomerase reaction, S2AL is rearranged via a Mg-dependent methyl migration to produce 3-hydroxy-3-methyl-2-ketobutyrate (HMKB). In the reductase reaction, this 2-ketoacid undergoes a metal-dependent reduction by NADPH to yield (R)-2,3-dihydroxy-isovalerate. This Listeria monocytogenes serovar 1/2a (strain ATCC BAA-679 / EGD-e) protein is Ketol-acid reductoisomerase (NADP(+)).